The primary structure comprises 168 residues: Putative peroxiredoxin prxA (168 aa).

Residues Leu-4–Phe-158 enclose the Thioredoxin domain. Cys-61 acts as the Cysteine sulfenic acid (-SOH) intermediate in catalysis.

This sequence belongs to the peroxiredoxin family. Prx5 subfamily. As to quaternary structure, homodimer; disulfide-linked, upon oxidation. Interacts with thioredoxin trxA.

The catalysed reaction is a hydroperoxide + [thioredoxin]-dithiol = an alcohol + [thioredoxin]-disulfide + H2O. Thiol-specific peroxidase that catalyzes the reduction of hydrogen peroxide and organic hydroperoxides to water and alcohols, respectively. Plays a role in cell protection against oxidative stress by detoxifying peroxides and as sensor of hydrogen peroxide-mediated signaling events. Involved in osmoadaptation. In Emericella nidulans (strain FGSC A4 / ATCC 38163 / CBS 112.46 / NRRL 194 / M139) (Aspergillus nidulans), this protein is Putative peroxiredoxin prxA.